A 41-amino-acid chain; its full sequence is Pi-stichotoxin-Hcr5b (41 aa).

3 cysteine pairs are disulfide-bonded: Cys-4–Cys-37, Cys-6–Cys-30, and Cys-20–Cys-38.

It belongs to the sea anemone type 3 (BDS) potassium channel toxin family.

Its subcellular location is the secreted. It localises to the nematocyst. In terms of biological role, remarkably non-selective toxin, with activity on many different ion channels. Weakly and reversibly inhibits rat and human homomeric ASIC1 (isoform ASIC1a) (IC(50)=4.8 uM, and IC(50)=14.6 uM), and ASIC3 (IC(50)=15.9 uM). Molecular modeling interaction with ASIC1a suggests that this peptide hinders the collapse of acidic pockets and stabilizes nonconducting channels state. It activates several potassium channels including Kv1.1/KCNA1, Kv1.2/KCNA2, and drosophila Shaker IR. It moderately to potently inhibits potassium channels including Kv1.3/KCNA3, Kv1.4/KCNA4, Kv1.5/KCNA5, Kv1.6/KCNA6, Kv2.1/KCNB1, Kv4.2/KCND2, Kv7.1/KCNQ1, Kv7.2/Kv7.3 (KCNQ2/KCNQ3), Kv7.4/KCNQ4, hERG/KCNH2, and C.elegans QKT1. On sodium channels, it moderately to potently inhibits Nav1.1/SCN1A, Nav1.2/SCN2A, Nav1.3/SCN3A, Nav1.4/SCN4A, Nav1.5/SCN5A, Nav1.6/SCN8A, Nav1.7/SCN9A, Nav1.8/SCN10A, and B.germanica BgNav. It also moderately to potently inhibits Cav3.1/CACNA1G, Cav3.2/CACNA1H, and Cav3.3/CACNA1I. Significant shifts in the voltage-current relationship are observed on Kv and Nav, depending on the channel isoform, whereas the toxin does not seem to modulate the voltage-sensor domains of Cav channels, acting mainly as a pore blocker. Does not activate nicotinic acetylcholine receptors (nAChR), but potentiates ACh-elicited current of human alpha-7/CHRNA7 nAChR. Is also able to bind T.californica muscle-type nAChRs. In vivo, causes an excitatory effect in mice behavior. Also shows antihyperalgesic and analgesic activity in the acid-induced muscle pain mice model, and weak anti-inflammatory effect in models of acute local inflammation. This Radianthus crispa (Leathery sea anemone) protein is Pi-stichotoxin-Hcr5b.